Reading from the N-terminus, the 538-residue chain is Putative outer membrane porin BglH (538 aa).

A signal peptide spans 1–25; sequence MFRRNIITSAILLMAPLAFSAQSLA.

It belongs to the porin LamB (TC 1.B.3) family.

Its subcellular location is the cell outer membrane. Its function is as follows. May be a sugar porin with a broad carbohydrate specificity. The chain is Putative outer membrane porin BglH (bglH) from Escherichia coli O6:H1 (strain CFT073 / ATCC 700928 / UPEC).